The chain runs to 160 residues: Cytochrome b6-f complex subunit 4 (160 aa).

A run of 3 helical transmembrane segments spans residues leucine 36–valine 56, leucine 95–glutamate 115, and threonine 131–isoleucine 151.

The protein belongs to the cytochrome b family. PetD subfamily. In terms of assembly, the 4 large subunits of the cytochrome b6-f complex are cytochrome b6, subunit IV (17 kDa polypeptide, petD), cytochrome f and the Rieske protein, while the 4 small subunits are petG, petL, petM and petN. The complex functions as a dimer.

The protein localises to the plastid. Its subcellular location is the chloroplast thylakoid membrane. Its function is as follows. Component of the cytochrome b6-f complex, which mediates electron transfer between photosystem II (PSII) and photosystem I (PSI), cyclic electron flow around PSI, and state transitions. The sequence is that of Cytochrome b6-f complex subunit 4 from Nephroselmis olivacea (Green alga).